Consider the following 306-residue polypeptide: Mating type protein SmtA-1 (306 aa).

Positions 49–104 (APKKKVNGFMGFRSYYSPLFSQFPQKARSPFMTILWQHDPFHNEWDFMCSVYSSIR) form a DNA-binding region, alpha box.

Belongs to the MATALPHA1 family.

It localises to the nucleus. Mating type proteins are sequence specific DNA-binding proteins that act as master switches in fungal differentiation by controlling gene expression in a cell type-specific fashion. Transcriptional activator that induces the transcription of alpha-specific genes. In Sordaria macrospora (strain ATCC MYA-333 / DSM 997 / K(L3346) / K-hell), this protein is Mating type protein SmtA-1 (SMTA1).